A 100-amino-acid polypeptide reads, in one-letter code: Eukaryotic translation initiation factor 4E-binding protein 3 (100 aa).

Positions Tyr40 to Leu46 match the YXXXXLphi motif motif. Residues Leu81–Ile100 are disordered. The segment covering Glu85–Ile100 has biased composition (acidic residues). The short motif at Phe96–Ile100 is the TOS motif element.

It belongs to the eIF4E-binding protein family. In terms of assembly, interacts with EIF4E. Interacts with RPA2 (in unphosphorylated form via N-terminus); the interaction enhances EIF4EBP3-mediated inhibition of EIF4E-mediated mRNA nuclear export. In terms of processing, phosphorylated. As to expression, expression is highest in skeletal muscle, heart, kidney, and pancreas, whereas there is very little expression in brain and thymus.

It is found in the cytoplasm. The protein localises to the nucleus. Its function is as follows. Repressor of translation initiation that regulates EIF4E activity by preventing its assembly into the eIF4F complex: the hypophosphorylated form competes with EIF4G1/EIF4G3 and strongly binds to EIF4E, leading to repression of translation. In contrast, the hyperphosphorylated form dissociates from EIF4E, allowing interaction between EIF4G1/EIF4G3 and EIF4E, leading to initiation of translation. Inhibits EIF4E-mediated mRNA nuclear export. The chain is Eukaryotic translation initiation factor 4E-binding protein 3 (EIF4EBP3) from Homo sapiens (Human).